We begin with the raw amino-acid sequence, 201 residues long: Recombination protein RecR (201 aa).

A C4-type zinc finger spans residues 60–75; sequence CKVCGNIDTQNPCTVC. The 96-residue stretch at 83-178 folds into the Toprim domain; sequence SIIVVVADVA…KVTRLAHGVP (96 aa).

It belongs to the RecR family.

May play a role in DNA repair. It seems to be involved in an RecBC-independent recombinational process of DNA repair. It may act with RecF and RecO. The chain is Recombination protein RecR from Rhodopseudomonas palustris (strain BisB18).